Consider the following 617-residue polypeptide: Proline--tRNA ligase (617 aa).

This sequence belongs to the class-II aminoacyl-tRNA synthetase family. ProS type 1 subfamily. In terms of assembly, homodimer.

The protein localises to the cytoplasm. The enzyme catalyses tRNA(Pro) + L-proline + ATP = L-prolyl-tRNA(Pro) + AMP + diphosphate. In terms of biological role, catalyzes the attachment of proline to tRNA(Pro) in a two-step reaction: proline is first activated by ATP to form Pro-AMP and then transferred to the acceptor end of tRNA(Pro). As ProRS can inadvertently accommodate and process non-cognate amino acids such as alanine and cysteine, to avoid such errors it has two additional distinct editing activities against alanine. One activity is designated as 'pretransfer' editing and involves the tRNA(Pro)-independent hydrolysis of activated Ala-AMP. The other activity is designated 'posttransfer' editing and involves deacylation of mischarged Ala-tRNA(Pro). The misacylated Cys-tRNA(Pro) is not edited by ProRS. This is Proline--tRNA ligase from Streptococcus pneumoniae serotype 19F (strain G54).